The sequence spans 107 residues: Nucleoid-associated protein MCA1327 (107 aa).

It belongs to the YbaB/EbfC family. As to quaternary structure, homodimer.

The protein resides in the cytoplasm. It is found in the nucleoid. Functionally, binds to DNA and alters its conformation. May be involved in regulation of gene expression, nucleoid organization and DNA protection. The sequence is that of Nucleoid-associated protein MCA1327 from Methylococcus capsulatus (strain ATCC 33009 / NCIMB 11132 / Bath).